Consider the following 105-residue polypeptide: Large ribosomal subunit protein bL21 (105 aa).

This sequence belongs to the bacterial ribosomal protein bL21 family. As to quaternary structure, part of the 50S ribosomal subunit. Contacts protein L20.

Functionally, this protein binds to 23S rRNA in the presence of protein L20. This is Large ribosomal subunit protein bL21 from Rickettsia typhi (strain ATCC VR-144 / Wilmington).